We begin with the raw amino-acid sequence, 269 residues long: uncharacterized protein (269 aa).

Residues Q181 to A191 show a composition bias toward basic and acidic residues. A disordered region spans residues Q181–G203. Positions S193–M202 are enriched in polar residues. S200 is subject to Phosphoserine.

This is an uncharacterized protein from Schizosaccharomyces pombe (strain 972 / ATCC 24843) (Fission yeast).